The primary structure comprises 456 residues: Phosphomethylpyrimidine synthase (456 aa).

Substrate is bound by residues Asn80, Met109, Tyr139, His175, 195–197 (SRG), 236–239 (DSLR), and Glu275. Residue His279 participates in Zn(2+) binding. Tyr302 is a substrate binding site. His343 serves as a coordination point for Zn(2+). [4Fe-4S] cluster-binding residues include Cys423, Cys426, and Cys431.

Belongs to the ThiC family. It depends on [4Fe-4S] cluster as a cofactor.

It catalyses the reaction 5-amino-1-(5-phospho-beta-D-ribosyl)imidazole + S-adenosyl-L-methionine = 4-amino-2-methyl-5-(phosphooxymethyl)pyrimidine + CO + 5'-deoxyadenosine + formate + L-methionine + 3 H(+). The protein operates within cofactor biosynthesis; thiamine diphosphate biosynthesis. Catalyzes the synthesis of the hydroxymethylpyrimidine phosphate (HMP-P) moiety of thiamine from aminoimidazole ribotide (AIR) in a radical S-adenosyl-L-methionine (SAM)-dependent reaction. In Synechococcus sp. (strain ATCC 27144 / PCC 6301 / SAUG 1402/1) (Anacystis nidulans), this protein is Phosphomethylpyrimidine synthase.